The sequence spans 649 residues: Forkhead box protein O1 (649 aa).

Disordered regions lie at residues 1–62 (MAEA…ASAS) and 112–151 (VHSAPPQPPPTGPLSQPPPVPPAAAGPLAGQPRKTSSSRR). The residue at position 24 (T24) is a Phosphothreonine; by PKB/AKT1 or PKB/AKT2 and SGK1. The span at 33–62 (NQSNSTTSSPAPSGSTAANPDATASLASAS) shows a compositional bias: low complexity. The span at 116-135 (PPQPPPTGPLSQPPPVPPAA) shows a compositional bias: pro residues. Positions 154 to 248 (WGNLSYADLI…KSGKSPRRRA (95 aa)) form a DNA-binding region, fork-head. DNA-binding regions lie at residues 205 to 212 (NSIRHNLS) and 228 to 231 (SSWW). Residue S206 is modified to Phosphoserine; by STK4/MST1. Phosphoserine occurs at positions 212, 228, and 229. A disordered region spans residues 228 to 339 (SSWWMLNPEG…DDLGDGDVHS (112 aa)). N6-acetyllysine occurs at positions 239 and 242. A Phosphoserine; by CDK1 modification is found at S243. Residues R245 and R247 each carry the omega-N-methylarginine; by PRMT1 modification. Positions 245 to 247 (RRR) match the Nuclear localization signal motif. A Phosphoserine; by PKB/AKT1 and SGK1 modification is found at S250. K256, K259, and K268 each carry N6-acetyllysine. A compositionally biased stretch (basic residues) spans 258–269 (AKSRGRAAKKKA). Residues 277-557 (GPGDSPGSQF…RLTPVKTPLQ (281 aa)) are sufficient for interaction with NLK. A phosphoserine mark is found at S281 and S292. Polar residues predominate over residues 303-320 (NWSTFRPRTSSNASTISG). S313 is modified (phosphoserine; by PKB/AKT1). S316 bears the Phosphoserine; by CK1 and SGK1 mark. S319 carries the post-translational modification Phosphoserine; by CK1. S323 bears the Phosphoserine mark. T327 bears the Phosphothreonine mark. The tract at residues 357–453 (SEISNPENME…GGLNQYNCAP (97 aa)) is required for interaction with RUNX2. K417 carries the N6-acetyllysine modification. A Required for interaction with SIRT1 motif is present at residues 456 to 460 (LKELL).

As to quaternary structure, interacts with LRPPRC. Interacts with RUNX2; the interaction inhibits RUNX2 transcriptional activity and mediates the IGF1/insulin-dependent BGLAP expression in osteoblasts Interacts with PPP2R1A; the interaction regulates the dephosphorylation of FOXO1 at Thr-24 and Ser-250 leading to its nuclear import. Interacts with NLK. Interacts with SIRT1; the interaction results in the deacetylation of FOXO1 leading to activation of FOXO1-mediated transcription of genes involved in DNA repair and stress resistance. Binds to CDK1. Interacts with the 14-3-3 proteins, YWHAG and YWHAZ; the interactions require insulin-stimulated phosphorylation on Thr-24, promote nuclear exit and loss of transcriptional activity. Interacts with SKP2; the interaction ubiquitinates FOXO1 leading to its proteasomal degradation. The interaction requires the presence of KRIT1. Interacts (via the C-terminal half) with ATF4 (via its DNA binding domain); the interaction occurs in osteoblasts, regulates glucose homeostasis via suppression of beta-cell proliferation and subsequent decrease in insulin production. Interacts with PRMT1; the interaction methylates FOXO1, prevents PKB/AKT1 phosphorylation and retains FOXO1 in the nucleus. Interacts with EP300 and CREBBP; the interactions acetylate FOXO1. Interacts with SIRT2; the interaction is disrupted in response to oxidative stress or serum deprivation, leading to increased level of acetylated FOXO1, which promotes stress-induced autophagy by stimulating E1-like activating enzyme ATG7. Interacts (acetylated form) with ATG7; the interaction is increased in response to oxidative stress or serum deprivation and promotes the autophagic process leading to cell death. Interacts (acetylated form) with PPARG. Interacts with XBP1; this interaction is direct and leads to FOXO1 ubiquitination and degradation via the proteasome pathway. Interacts (via the Fork-head domain) with CEBPA; the interaction increases when FOXO1 is deacetylated. Interacts with WDFY2. Forms a complex with WDFY2 and AKT1. Interacts with CRY1. Interacts with PPIA/CYPA; the interaction promotes FOXO1 dephosphorylation, nuclear accumulation and transcriptional activity. Interacts with TOX4; FOXO1 is required for full induction of TOX4-dependent activity and the interaction is inhibited by insulin. Interacts (when phosphorylated on Ser-250) with STUB1/CHIP. Post-translationally, phosphorylation by NLK promotes nuclear export and inhibits the transcriptional activity. In response to growth factors, phosphorylation on Thr-24, Ser-250 and Ser-313 by PKB/AKT1 promotes nuclear export and inactivation of transactivational activity. Phosphorylation on Thr-24 is required for binding 14-3-3 proteins. Phosphorylation of Ser-250 decreases DNA-binding activity and promotes the phosphorylation of Thr-24 and Ser-313, permitting phosphorylation of Ser-316 and Ser-319, probably by CDK1, leading to nuclear exclusion and loss of function. Stress signals, such as response to oxygen or nitric oxide, attenuate the PKB/AKT1-mediated phosphorylation leading to nuclear retention. Phosphorylation of Ser-323 is independent of IGF1 and leads to reduced function. Dephosphorylated on Thr-24 and Ser-250 by PP2A in beta-cells under oxidative stress leading to nuclear retention. Phosphorylation of Ser-243 by CDK1 disrupts binding of 14-3-3 proteins leading to nuclear accumulation and has no effect on DNA binding nor transcriptional activity. Phosphorylation by STK4/MST1 on Ser-206, upon oxidative stress, inhibits binding to 14-3-3 proteins and nuclear export. PPIA/CYPA promotes its dephosphorylation on Ser-250. Ubiquitinated by SKP2. Ubiquitination leads to proteasomal degradation. Ubiquitinated by STUB1/CHIP; when Ser-250 is phosphorylated. In terms of processing, methylation inhibits AKT1-mediated phosphorylation at Ser-250 and is increased by oxidative stress. Post-translationally, acetylated. Acetylation at Lys-256 and Lys-268 are necessary for autophagic cell death induction. Deacetylated by SIRT2 in response to oxidative stress or serum deprivation, thereby negatively regulating FOXO1-mediated autophagic cell death. Once in the nucleus, acetylated by CREBBP/EP300. Acetylation diminishes the interaction with target DNA and attenuates the transcriptional activity. It increases the phosphorylation at Ser-250. Deacetylation by SIRT1 results in reactivation of the transcriptional activity. Oxidative stress by hydrogen peroxide treatment appears to promote deacetylation and uncoupling of insulin-induced phosphorylation. By contrast, resveratrol acts independently of acetylation. Acetylated at Lys-417, promoting its localization to the nucleus and transcription factor activity. Deacetylation at Lys-417 by SIRT6, promotes its translocation into the cytoplasm, preventing its transcription factor activity. Deacetylation and subsequent inhibition by SIRT6 has different effects depending on cell types: it inhibits gluconeogenesis in hepatocytes, promotes glucose sensing in pancreatic beta-cells and regulates lipid catabolism in brown adipocytes. Expressed in the internal elastic lamina of the carotid artery (at protein level).

The protein localises to the cytoplasm. Its subcellular location is the nucleus. Functionally, transcription factor that is the main target of insulin signaling and regulates metabolic homeostasis in response to oxidative stress. Binds to the insulin response element (IRE) with consensus sequence 5'-TT[G/A]TTTTG-3' and the related Daf-16 family binding element (DBE) with consensus sequence 5'-TT[G/A]TTTAC-3'. Activity suppressed by insulin. Main regulator of redox balance and osteoblast numbers and controls bone mass. Orchestrates the endocrine function of the skeleton in regulating glucose metabolism. Also acts as a key regulator of chondrogenic commitment of skeletal progenitor cells in response to lipid availability: when lipids levels are low, translocates to the nucleus and promotes expression of SOX9, which induces chondrogenic commitment and suppresses fatty acid oxidation. Acts synergistically with ATF4 to suppress osteocalcin/BGLAP activity, increasing glucose levels and triggering glucose intolerance and insulin insensitivity. Also suppresses the transcriptional activity of RUNX2, an upstream activator of osteocalcin/BGLAP. Acts as an inhibitor of glucose sensing in pancreatic beta cells by acting as a transcription repressor and suppressing expression of PDX1. In hepatocytes, promotes gluconeogenesis by acting together with PPARGC1A and CEBPA to activate the expression of genes such as IGFBP1, G6PC1 and PCK1. Also promotes gluconeogenesis by directly promoting expression of PPARGC1A and G6PC1. Important regulator of cell death acting downstream of CDK1, PKB/AKT1 and STK4/MST1. Promotes neural cell death. Mediates insulin action on adipose tissue. Regulates the expression of adipogenic genes such as PPARG during preadipocyte differentiation and, adipocyte size and adipose tissue-specific gene expression in response to excessive calorie intake. Regulates the transcriptional activity of GADD45A and repair of nitric oxide-damaged DNA in beta-cells. Required for the autophagic cell death induction in response to starvation or oxidative stress in a transcription-independent manner. Mediates the function of MLIP in cardiomyocytes hypertrophy and cardiac remodeling. Positive regulator of apoptosis in cardiac smooth muscle cells as a result of its transcriptional activation of pro-apoptotic genes. Regulates endothelial cell (EC) viability and apoptosis in a PPIA/CYPA-dependent manner via transcription of CCL2 and BCL2L11 which are involved in EC chemotaxis and apoptosis. This chain is Forkhead box protein O1 (Foxo1), found in Rattus norvegicus (Rat).